We begin with the raw amino-acid sequence, 615 residues long: Filament-like plant protein 3 (615 aa).

The span at 1–18 (MDRRSWLWRRKSSEKSPG) shows a compositional bias: basic and acidic residues. Residues 1 to 55 (MDRRSWLWRRKSSEKSPGETESTGSVSSHSERFSDDQRSQSPELNSKPVTREEEA) form a disordered region. Over residues 19 to 28 (ETESTGSVSS) the composition is skewed to polar residues. Over residues 29-38 (HSERFSDDQR) the composition is skewed to basic and acidic residues. A compositionally biased stretch (polar residues) spans 39 to 48 (SQSPELNSKP). Coiled-coil stretches lie at residues 87-121 (AEEA…LEDR) and 148-211 (EEAI…KSEE). Disordered regions lie at residues 258–289 (DNSS…SPSE) and 319–343 (PHSE…HVNQ). Residues 262–288 (DLKSSIDNQSDYSGRVSFSDNEMQSPS) are compositionally biased toward polar residues. A compositionally biased stretch (basic and acidic residues) spans 322–343 (EPGRKHSESNKELEKSNAHVNQ). A coiled-coil region spans residues 327 to 563 (HSESNKELEK…KQELEHHQET (237 aa)).

The protein belongs to the FPP family. In terms of assembly, interacts with WPP/MAF proteins. Binds to COG2; this interaction promotes the association between cortical microtubules and EXO70A1. In terms of tissue distribution, accumulates in preferentially xylem cells.

It localises to the vesicle. In terms of biological role, ensures, when in complex with COG2 and FPP2/VETH2, the correct secondary cell wall (SCW) deposition pattern by recruiting exocyst components to cortical microtubules in xylem cells during secondary cell wall deposition by recruiting EXO70A1. The protein is Filament-like plant protein 3 of Arabidopsis thaliana (Mouse-ear cress).